A 451-amino-acid chain; its full sequence is LisH domain-containing protein C1711.05 (451 aa).

Positions 6 to 38 (MKSKVCPLIYHFLQENGYVKTAQTFLKETGDKD) constitute a LisH domain. Residues 59–394 (PYLTTEDVGK…VGDPSQWDFA (336 aa)) form a disordered region. A compositionally biased stretch (basic and acidic residues) spans 73 to 98 (KESLEKSNDDSQKISKKGAPPEKAHS). Low complexity predominate over residues 99–120 (SSEASGSGSSSDESDSSSSESE). A compositionally biased stretch (acidic residues) spans 135–145 (SESESSSEDSD). The span at 146–174 (SSSSSSDSESESSSEGSDSSSSSSSSESE) shows a compositional bias: low complexity. Residues 189–199 (SESESSSEDSD) are compositionally biased toward acidic residues. A compositionally biased stretch (low complexity) spans 200–228 (SSSSSSDSESESSSEGSDSSSSSSSSESE). Acidic residues-rich tracts occupy residues 243 to 253 (SESESSSEDSD) and 278 to 300 (DSED…EDSD). Low complexity predominate over residues 301-319 (STSSSSDSDSSSSSEDGNS). Positions 320–332 (NTDTTTSGEVSAQ) are enriched in polar residues. Low complexity predominate over residues 333–343 (SSTNSTSSEES). Over residues 344–365 (TSVKDEDSSKIHDKSLKRKHED) the composition is skewed to basic and acidic residues. A compositionally biased stretch (low complexity) spans 369-380 (STSTKSSRTTKT).

The protein resides in the nucleus. Its subcellular location is the nucleolus. This chain is LisH domain-containing protein C1711.05, found in Schizosaccharomyces pombe (strain 972 / ATCC 24843) (Fission yeast).